The following is a 355-amino-acid chain: Probable dual-specificity RNA methyltransferase RlmN (355 aa).

Glutamate 89 acts as the Proton acceptor in catalysis. Positions 95-322 constitute a Radical SAM core domain; sequence YENRKTVCLS…KRLGVPTSIR (228 aa). A disulfide bond links cysteine 102 and cysteine 333. Cysteine 109, cysteine 113, and cysteine 116 together coordinate [4Fe-4S] cluster. S-adenosyl-L-methionine is bound by residues 159-160, serine 191, 214-216, and asparagine 290; these read GE and SLH. The S-methylcysteine intermediate role is filled by cysteine 333.

The protein belongs to the radical SAM superfamily. RlmN family. [4Fe-4S] cluster is required as a cofactor.

It localises to the cytoplasm. It catalyses the reaction adenosine(2503) in 23S rRNA + 2 reduced [2Fe-2S]-[ferredoxin] + 2 S-adenosyl-L-methionine = 2-methyladenosine(2503) in 23S rRNA + 5'-deoxyadenosine + L-methionine + 2 oxidized [2Fe-2S]-[ferredoxin] + S-adenosyl-L-homocysteine. The catalysed reaction is adenosine(37) in tRNA + 2 reduced [2Fe-2S]-[ferredoxin] + 2 S-adenosyl-L-methionine = 2-methyladenosine(37) in tRNA + 5'-deoxyadenosine + L-methionine + 2 oxidized [2Fe-2S]-[ferredoxin] + S-adenosyl-L-homocysteine. Functionally, specifically methylates position 2 of adenine 2503 in 23S rRNA and position 2 of adenine 37 in tRNAs. This Thermus thermophilus (strain ATCC 27634 / DSM 579 / HB8) protein is Probable dual-specificity RNA methyltransferase RlmN.